The sequence spans 1183 residues: DNA-directed RNA polymerase subunit beta (1183 aa).

Residues 1151 to 1162 (EIEMADVDDEDA) show a composition bias toward acidic residues. The tract at residues 1151–1183 (EIEMADVDDEDAAERKVDLQQKSAPESQKETTD) is disordered.

Belongs to the RNA polymerase beta chain family. As to quaternary structure, the RNAP catalytic core consists of 2 alpha, 1 beta, 1 beta' and 1 omega subunit. When a sigma factor is associated with the core the holoenzyme is formed, which can initiate transcription.

The catalysed reaction is RNA(n) + a ribonucleoside 5'-triphosphate = RNA(n+1) + diphosphate. In terms of biological role, DNA-dependent RNA polymerase catalyzes the transcription of DNA into RNA using the four ribonucleoside triphosphates as substrates. The polypeptide is DNA-directed RNA polymerase subunit beta (Staphylococcus epidermidis (strain ATCC 12228 / FDA PCI 1200)).